A 91-amino-acid polypeptide reads, in one-letter code: Alpha-elapitoxin-Oh2b (91 aa).

The first 21 residues, 1–21 (MKTLLLTLVVMTIVCLDLGYT), serve as a signal peptide directing secretion. 5 disulfides stabilise this stretch: Cys24/Cys41, Cys34/Cys62, Cys47/Cys51, Cys66/Cys77, and Cys78/Cys83.

The protein belongs to the three-finger toxin family. Long-chain subfamily. Type II alpha-neurotoxin sub-subfamily. Monomer. As to expression, expressed by the venom gland.

Its subcellular location is the secreted. Functionally, binds with high affinity to muscular (alpha-1/CHRNA1) and neuronal (alpha-7/CHRNA7) nicotinic acetylcholine receptor (nAChR) and inhibits acetylcholine from binding to the receptor, thereby impairing neuromuscular and neuronal transmission. Recombinant LNTX1 leads to a functional block of the muscle-type acetylcholine receptors. Has a cytotoxic activity. This neurotoxin is lethal. This chain is Alpha-elapitoxin-Oh2b, found in Ophiophagus hannah (King cobra).